We begin with the raw amino-acid sequence, 244 residues long: rRNA adenine N-6-methyltransferase (244 aa).

S-adenosyl-L-methionine is bound by residues N11, I13, G38, E59, D84, and N101.

It belongs to the class I-like SAM-binding methyltransferase superfamily. rRNA adenine N(6)-methyltransferase family.

It carries out the reaction adenosine(2085) in 23S rRNA + 2 S-adenosyl-L-methionine = N(6)-dimethyladenosine(2085) in 23S rRNA + 2 S-adenosyl-L-homocysteine + 2 H(+). This protein produces a dimethylation of the adenine residue at position 2085 in 23S rRNA, resulting in reduced affinity between ribosomes and macrolide-lincosamide-streptogramin B antibiotics. Is involved in erythromycin resistance. This Limosilactobacillus reuteri (Lactobacillus reuteri) protein is rRNA adenine N-6-methyltransferase (ermGT).